We begin with the raw amino-acid sequence, 460 residues long: Jacalin-related lectin 36 (460 aa).

The Jacalin-type lectin 1 domain occupies 1-131; the sequence is MAAATMSWDD…LNSIDVHFAP (131 aa). A2 bears the N-acetylalanine mark. 3 disordered regions span residues 34–57, 133–162, and 291–334; these read YDGD…VSLS, PSSS…WDDG, and SGRG…PHEG. Positions 133–143 are enriched in low complexity; the sequence is PSSSSSSSSLS. In terms of domain architecture, Jacalin-type lectin 2 spans 145-289; that stretch reads ANKVDAQGGK…LNALGAYFAP (145 aa). Positions 292–309 are enriched in polar residues; it reads GRGTPSATQPPGSAQPTG. Residues 313–457 enclose the Jacalin-type lectin 3 domain; the sequence is AKKLEAKGGN…IHQVGVHVKP (145 aa).

Belongs to the jacalin lectin family.

This Arabidopsis thaliana (Mouse-ear cress) protein is Jacalin-related lectin 36 (JAL36).